The chain runs to 206 residues: Histidine biosynthesis bifunctional protein HisIE (206 aa).

A phosphoribosyl-AMP cyclohydrolase region spans residues 1 to 117 (MGSNEVATGD…SCFPSAPGQF (117 aa)). The phosphoribosyl-ATP pyrophosphohydrolase stretch occupies residues 118-206 (LGSLDALVAE…AAALLESRHQ (89 aa)).

This sequence in the N-terminal section; belongs to the PRA-CH family. It in the C-terminal section; belongs to the PRA-PH family.

The protein resides in the cytoplasm. It carries out the reaction 1-(5-phospho-beta-D-ribosyl)-ATP + H2O = 1-(5-phospho-beta-D-ribosyl)-5'-AMP + diphosphate + H(+). It catalyses the reaction 1-(5-phospho-beta-D-ribosyl)-5'-AMP + H2O = 1-(5-phospho-beta-D-ribosyl)-5-[(5-phospho-beta-D-ribosylamino)methylideneamino]imidazole-4-carboxamide. It functions in the pathway amino-acid biosynthesis; L-histidine biosynthesis; L-histidine from 5-phospho-alpha-D-ribose 1-diphosphate: step 2/9. It participates in amino-acid biosynthesis; L-histidine biosynthesis; L-histidine from 5-phospho-alpha-D-ribose 1-diphosphate: step 3/9. The sequence is that of Histidine biosynthesis bifunctional protein HisIE from Xanthomonas axonopodis pv. citri (strain 306).